The sequence spans 519 residues: Maturase K (519 aa).

It belongs to the intron maturase 2 family. MatK subfamily.

It localises to the plastid. The protein resides in the chloroplast. Its function is as follows. Usually encoded in the trnK tRNA gene intron. Probably assists in splicing its own and other chloroplast group II introns. This Aesculus pavia (Red buckeye) protein is Maturase K.